The primary structure comprises 84 residues: U-scoloptoxin(10)-Er1a (84 aa).

Residues 1–24 (MSRFCLLFVAFGFVLYFLHMEVTG) form the signal peptide.

It belongs to the scoloptoxin-10 family. Contains 3 disulfide bonds. As to expression, expressed by the venom gland.

It localises to the secreted. This chain is U-scoloptoxin(10)-Er1a, found in Ethmostigmus rubripes (Giant centipede).